The sequence spans 119 residues: Ribonuclease P protein component (119 aa).

This sequence belongs to the RnpA family. In terms of assembly, consists of a catalytic RNA component (M1 or rnpB) and a protein subunit.

The catalysed reaction is Endonucleolytic cleavage of RNA, removing 5'-extranucleotides from tRNA precursor.. Its function is as follows. RNaseP catalyzes the removal of the 5'-leader sequence from pre-tRNA to produce the mature 5'-terminus. It can also cleave other RNA substrates such as 4.5S RNA. The protein component plays an auxiliary but essential role in vivo by binding to the 5'-leader sequence and broadening the substrate specificity of the ribozyme. The polypeptide is Ribonuclease P protein component (Borreliella burgdorferi (strain ZS7) (Borrelia burgdorferi)).